The primary structure comprises 220 residues: GTP-binding protein YPT53 (220 aa).

GTP is bound by residues 19 to 26 (GESAVGKS), 67 to 71 (DTAGQ), and 125 to 128 (NKMD). 2 S-geranylgeranyl cysteine lipidation sites follow: cysteine 218 and cysteine 220. A Cysteine methyl ester modification is found at cysteine 220.

Belongs to the small GTPase superfamily. Rab family.

It localises to the cell membrane. Its function is as follows. Required for transport in the endocytic pathway and for correct sorting of the vacuolar hydrolases suggesting a possible intersection of the endocytic with the vacuolar sorting pathway. May be involved in recruiting the MON1-CCZ1 complex to membranes enriched in phosphatidylinositol 3-phosphate (PtdIns[3]P) or other charged lipids, leading to recruitment of YPT7. This chain is GTP-binding protein YPT53 (YPT53), found in Saccharomyces cerevisiae (strain ATCC 204508 / S288c) (Baker's yeast).